The chain runs to 173 residues: Dual-action ribosomal maturation protein DarP (173 aa).

The protein belongs to the DarP family.

It is found in the cytoplasm. Its function is as follows. Member of a network of 50S ribosomal subunit biogenesis factors which assembles along the 30S-50S interface, preventing incorrect 23S rRNA structures from forming. Promotes peptidyl transferase center (PTC) maturation. This chain is Dual-action ribosomal maturation protein DarP, found in Pseudomonas putida (strain GB-1).